Here is a 276-residue protein sequence, read N- to C-terminus: Undecaprenyl-diphosphatase (276 aa).

6 helical membrane-spanning segments follow: residues 43–63 (RAMA…VWEF), 85–105 (LNLL…ADTI), 109–129 (LFNA…MLWA), 183–203 (AATE…AVYS), 218–238 (VFAI…RGLL), and 254–274 (IAFG…WASA).

The protein belongs to the UppP family.

It is found in the cell inner membrane. The enzyme catalyses di-trans,octa-cis-undecaprenyl diphosphate + H2O = di-trans,octa-cis-undecaprenyl phosphate + phosphate + H(+). Catalyzes the dephosphorylation of undecaprenyl diphosphate (UPP). Confers resistance to bacitracin. This is Undecaprenyl-diphosphatase from Pseudomonas syringae pv. syringae (strain B728a).